The primary structure comprises 59 residues: Cuticle protein 7 isoform b (59 aa).

The residue at position 1 (Q1) is a Pyrrolidone carboxylic acid.

This chain is Cuticle protein 7 isoform b, found in Limulus polyphemus (Atlantic horseshoe crab).